Consider the following 154-residue polypeptide: Protein AE7-like 1 (154 aa).

This sequence belongs to the MIP18 family.

In terms of biological role, may play a role in chromosome segregation through establishment of sister chromatid cohesion. Unable to complement ae7 mutants, and thus probably not involved in the cytosolic iron-sulfur assembly (CIA) pathway. The protein is Protein AE7-like 1 of Arabidopsis thaliana (Mouse-ear cress).